The chain runs to 55 residues: Ferredoxin (55 aa).

2 consecutive 4Fe-4S ferredoxin-type domains span residues 2–27 (YKIT…SESD) and 28–55 (AVRV…IVEG). Residues Cys-8, Cys-11, Cys-14, Cys-18, Cys-37, Cys-40, Cys-43, and Cys-47 each contribute to the [4Fe-4S] cluster site.

The cofactor is [4Fe-4S] cluster.

Functionally, ferredoxins are iron-sulfur proteins that transfer electrons in a wide variety of metabolic reactions. This is Ferredoxin from Clostridium sp. (strain M-E).